A 205-amino-acid chain; its full sequence is Recombination protein RecR (205 aa).

The C4-type zinc-finger motif lies at 58 to 73 (CKKCHTISDHELCAIC). Residues 81 to 177 (RVVCIVEDIR…KISTIARGIP (97 aa)) form the Toprim domain.

This sequence belongs to the RecR family.

Its function is as follows. May play a role in DNA repair. It seems to be involved in an RecBC-independent recombinational process of DNA repair. It may act with RecF and RecO. The sequence is that of Recombination protein RecR from Cytophaga hutchinsonii (strain ATCC 33406 / DSM 1761 / CIP 103989 / NBRC 15051 / NCIMB 9469 / D465).